A 281-amino-acid chain; its full sequence is Pantothenate synthetase (281 aa).

30–37 (MGYLHEGH) provides a ligand contact to ATP. The active-site Proton donor is the histidine 37. Glutamine 61 serves as a coordination point for (R)-pantoate. Glutamine 61 lines the beta-alanine pocket. Residue 147–150 (GEKD) participates in ATP binding. Residue glutamine 153 coordinates (R)-pantoate. ATP-binding positions include valine 176 and 184–187 (MSSR).

The protein belongs to the pantothenate synthetase family. Homodimer.

It is found in the cytoplasm. The enzyme catalyses (R)-pantoate + beta-alanine + ATP = (R)-pantothenate + AMP + diphosphate + H(+). It participates in cofactor biosynthesis; (R)-pantothenate biosynthesis; (R)-pantothenate from (R)-pantoate and beta-alanine: step 1/1. Functionally, catalyzes the condensation of pantoate with beta-alanine in an ATP-dependent reaction via a pantoyl-adenylate intermediate. This is Pantothenate synthetase from Desulfatibacillum aliphaticivorans.